Consider the following 375-residue polypeptide: Succinyl-diaminopimelate desuccinylase (375 aa).

Residue His-66 coordinates Zn(2+). The active site involves Asp-68. Asp-99 contacts Zn(2+). The Proton acceptor role is filled by Glu-133. Zn(2+) is bound by residues Glu-134, Glu-162, and His-348.

Belongs to the peptidase M20A family. DapE subfamily. Homodimer. It depends on Zn(2+) as a cofactor. Co(2+) is required as a cofactor.

The catalysed reaction is N-succinyl-(2S,6S)-2,6-diaminopimelate + H2O = (2S,6S)-2,6-diaminopimelate + succinate. It participates in amino-acid biosynthesis; L-lysine biosynthesis via DAP pathway; LL-2,6-diaminopimelate from (S)-tetrahydrodipicolinate (succinylase route): step 3/3. Functionally, catalyzes the hydrolysis of N-succinyl-L,L-diaminopimelic acid (SDAP), forming succinate and LL-2,6-diaminopimelate (DAP), an intermediate involved in the bacterial biosynthesis of lysine and meso-diaminopimelic acid, an essential component of bacterial cell walls. This is Succinyl-diaminopimelate desuccinylase from Yersinia pseudotuberculosis serotype O:1b (strain IP 31758).